A 200-amino-acid polypeptide reads, in one-letter code: MLFRYLVWLFRFIEVKNVASISLLVIGSNSLTTAISNNTSTTILPTTSSNSLMTAIPNNTSTTISPTTSSNYLTSAISTNISDKEEDTPFSTDKTVFDGLSPITLYRTIRSTLNDTSTKTMTDHILTRPYRPTTVIFHSDTPQPVKNATQGNIIKKTYRQVLTFFIQPNPLFPCFKNHEVFLNLANILNTILCIILIKNV.

2 consecutive repeat copies span residues Ser-28 to Ser-48 and Ser-49 to Ser-69. The 3; approximate repeat unit spans residues Ser-70–Ser-91.

The protein belongs to the asfivirus I196L family.

The polypeptide is Late protein I196L (African swine fever virus (isolate Tick/South Africa/Pretoriuskop Pr4/1996) (ASFV)).